A 350-amino-acid polypeptide reads, in one-letter code: Pleckstrin (350 aa).

The 98-residue stretch at 4 to 101 (KRIREGYLVK…WVRDIKKAIK (98 aa)) folds into the PH 1 domain. An N6-acetyllysine modification is found at lysine 64. Serine 113 and serine 117 each carry phosphoserine. Residues 136–221 (PEKGIKELNL…SPDAFYYFPD (86 aa)) enclose the DEP domain. Positions 244–347 (VIIKQGCLLK…WIKAIQVASR (104 aa)) constitute a PH 2 domain.

In terms of biological role, major protein kinase C substrate of platelets. This Mus musculus (Mouse) protein is Pleckstrin (Plek).